The sequence spans 150 residues: Large ribosomal subunit protein uL15 (150 aa).

A disordered region spans residues 1–51 (MKLHTLRPAKGSVKTSKRIGRGTGSGRGGTSTKGHKGAKSRSGYSSKIGFE). Residues 21 to 31 (RGTGSGRGGTS) are compositionally biased toward gly residues.

The protein belongs to the universal ribosomal protein uL15 family. In terms of assembly, part of the 50S ribosomal subunit.

In terms of biological role, binds to the 23S rRNA. This is Large ribosomal subunit protein uL15 from Cytophaga hutchinsonii (strain ATCC 33406 / DSM 1761 / CIP 103989 / NBRC 15051 / NCIMB 9469 / D465).